The chain runs to 598 residues: Glutamyl-tRNA(Gln) amidotransferase subunit E (598 aa).

Belongs to the GatB/GatE family. GatE subfamily. In terms of assembly, heterodimer of GatD and GatE.

It carries out the reaction L-glutamyl-tRNA(Gln) + L-glutamine + ATP + H2O = L-glutaminyl-tRNA(Gln) + L-glutamate + ADP + phosphate + H(+). Functionally, allows the formation of correctly charged Gln-tRNA(Gln) through the transamidation of misacylated Glu-tRNA(Gln) in organisms which lack glutaminyl-tRNA synthetase. The reaction takes place in the presence of glutamine and ATP through an activated gamma-phospho-Glu-tRNA(Gln). The GatDE system is specific for glutamate and does not act on aspartate. The protein is Glutamyl-tRNA(Gln) amidotransferase subunit E of Thermoplasma volcanium (strain ATCC 51530 / DSM 4299 / JCM 9571 / NBRC 15438 / GSS1).